A 294-amino-acid chain; its full sequence is Ribosomal RNA small subunit methyltransferase A (294 aa).

S-adenosyl-L-methionine-binding residues include asparagine 31, leucine 33, glycine 58, glutamate 79, aspartate 111, and asparagine 136.

This sequence belongs to the class I-like SAM-binding methyltransferase superfamily. rRNA adenine N(6)-methyltransferase family. RsmA subfamily.

The protein resides in the cytoplasm. The enzyme catalyses adenosine(1518)/adenosine(1519) in 16S rRNA + 4 S-adenosyl-L-methionine = N(6)-dimethyladenosine(1518)/N(6)-dimethyladenosine(1519) in 16S rRNA + 4 S-adenosyl-L-homocysteine + 4 H(+). Specifically dimethylates two adjacent adenosines (A1518 and A1519) in the loop of a conserved hairpin near the 3'-end of 16S rRNA in the 30S particle. May play a critical role in biogenesis of 30S subunits. The chain is Ribosomal RNA small subunit methyltransferase A from Lactobacillus helveticus (strain DPC 4571).